The primary structure comprises 183 residues: UPF0398 protein BLi02355/BL05236 (183 aa).

This sequence belongs to the UPF0398 family.

The polypeptide is UPF0398 protein BLi02355/BL05236 (Bacillus licheniformis (strain ATCC 14580 / DSM 13 / JCM 2505 / CCUG 7422 / NBRC 12200 / NCIMB 9375 / NCTC 10341 / NRRL NRS-1264 / Gibson 46)).